The sequence spans 181 residues: Ribulose bisphosphate carboxylase small subunit, chloroplastic 1 (181 aa).

The N-terminal 54 residues, 1-54, are a transit peptide targeting the chloroplast; the sequence is MASSMLSSAAVVTSPAQATMVAPFTGLKSSSAFPVTRKANNDITSIVSNGGRVS.

The protein belongs to the RuBisCO small chain family. As to quaternary structure, heterohexadecamer of 8 large and 8 small subunits.

It localises to the plastid. It is found in the chloroplast. In terms of biological role, ruBisCO catalyzes two reactions: the carboxylation of D-ribulose 1,5-bisphosphate, the primary event in carbon dioxide fixation, as well as the oxidative fragmentation of the pentose substrate. Both reactions occur simultaneously and in competition at the same active site. Although the small subunit is not catalytic it is essential for maximal activity. This chain is Ribulose bisphosphate carboxylase small subunit, chloroplastic 1, found in Brassica napus (Rape).